A 259-amino-acid chain; its full sequence is Imidazole glycerol phosphate synthase subunit HisF (259 aa).

Catalysis depends on residues Asp11 and Asp130.

Belongs to the HisA/HisF family. In terms of assembly, heterodimer of HisH and HisF.

Its subcellular location is the cytoplasm. It carries out the reaction 5-[(5-phospho-1-deoxy-D-ribulos-1-ylimino)methylamino]-1-(5-phospho-beta-D-ribosyl)imidazole-4-carboxamide + L-glutamine = D-erythro-1-(imidazol-4-yl)glycerol 3-phosphate + 5-amino-1-(5-phospho-beta-D-ribosyl)imidazole-4-carboxamide + L-glutamate + H(+). The protein operates within amino-acid biosynthesis; L-histidine biosynthesis; L-histidine from 5-phospho-alpha-D-ribose 1-diphosphate: step 5/9. Functionally, IGPS catalyzes the conversion of PRFAR and glutamine to IGP, AICAR and glutamate. The HisF subunit catalyzes the cyclization activity that produces IGP and AICAR from PRFAR using the ammonia provided by the HisH subunit. This Nitratidesulfovibrio vulgaris (strain DP4) (Desulfovibrio vulgaris) protein is Imidazole glycerol phosphate synthase subunit HisF.